The following is a 359-amino-acid chain: Type-1 angiotensin II receptor B (359 aa).

Residues 1-25 lie on the Extracellular side of the membrane; sequence MILNSSIEDGIKRIQDDCPKAGRHN. Asparagine 4 carries N-linked (GlcNAc...) asparagine glycosylation. The angiotensin II site is built by glutamine 15 and aspartate 17. 2 cysteine pairs are disulfide-bonded: cysteine 18–cysteine 274 and cysteine 101–cysteine 180. A helical transmembrane segment spans residues 26-55; that stretch reads YIFVMIPTLYSIIFVVGIFGNSLVVIVIYF. Over 56–61 the chain is Cytoplasmic; it reads YMKLKT. Residues 62–89 form a helical membrane-spanning segment; it reads VASVFLLNLALADLCFLLTLPLWAVYTA. The Extracellular segment spans residues 90-98; that stretch reads MEYQWPFGN. The helical transmembrane segment at 99 to 125 threads the bilayer; that stretch reads HLCKIASASVSFNLYASVFLLTCLSID. Residues 126–141 lie on the Cytoplasmic side of the membrane; that stretch reads RYLAIVHPMKSRLRRT. Residues 142–165 traverse the membrane as a helical segment; it reads MLVAKVTCIIIWLMAGLASLPAVI. Over 166–190 the chain is Extracellular; sequence HRNVYFIENTNITVCAFHYESQNST. An angiotensin II-binding site is contributed by arginine 167. Asparagine 176 carries an N-linked (GlcNAc...) asparagine glycan. Angiotensin II-binding residues include phenylalanine 182, histidine 183, and tyrosine 184. Asparagine 188 carries an N-linked (GlcNAc...) asparagine glycan. The helical transmembrane segment at 191–216 threads the bilayer; sequence LPIGLGLTKNILGFVFPFVIILTSYT. An angiotensin II-binding site is contributed by lysine 199. Topologically, residues 217–239 are cytoplasmic; that stretch reads LIWKALKKAYKIQKNTPRNDDIF. The helical transmembrane segment at 240–268 threads the bilayer; sequence RIIMAIVLFFFFSWVPHQIFSFLDVLIQL. The Extracellular portion of the chain corresponds to 269-278; that stretch reads GVIHDCEIAD. Residues 279–304 form a helical membrane-spanning segment; the sequence is VVDTAMPITICIAYFNNCLNPLFYGF. Residues 305–359 are Cytoplasmic-facing; it reads LGKKFKRYFLQLLKYIPPKARSHAGLSTKMSTLSYRPSDNMSSSARKSAYCFEVE. The S-palmitoyl cysteine moiety is linked to residue cysteine 355.

This sequence belongs to the G-protein coupled receptor 1 family. In terms of assembly, interacts with MAS1. Interacts with ARRB1. Interacts with FLNA (via filamin repeat 21); increases PKA-mediated phosphorylation of FLNA. In terms of processing, C-terminal Ser or Thr residues may be phosphorylated.

It is found in the cell membrane. In terms of biological role, receptor for angiotensin II, a vasoconstricting peptide, which acts as a key regulator of blood pressure and sodium retention by the kidney. The activated receptor in turn couples to G-alpha proteins G(q) (GNAQ, GNA11, GNA14 or GNA15) and thus activates phospholipase C and increases the cytosolic Ca(2+) concentrations, which in turn triggers cellular responses such as stimulation of protein kinase C. The sequence is that of Type-1 angiotensin II receptor B (Agtr1b) from Mus musculus (Mouse).